The chain runs to 800 residues: Calmodulin-sensitive adenylate cyclase (800 aa).

The first 33 residues, 1 to 33 (MTRNKFIPNKFSIISFSVLLFAISSSQAIEVNA), serve as a signal peptide directing secretion. Residues 60–273 (KDSINNLVKT…MFEYMNKLEK (214 aa)) form the ATLF-like domain. A catalytic CA1 region spans residues 294–349 (DVLKGEKALKASGLVPEHADAFKKIARELNTYILFRPVNKLATNLIKSGVATKGLN). Residues 350-489 (VHGKSSDWGP…NVEGVLKPLT (140 aa)) form a catalytic CB region. The active-site Proton acceptor is the histidine 351. The catalytic CA2 stretch occupies residues 490 to 622 (ADYDLFALAP…RFIEKNITGK (133 aa)). Mg(2+)-binding residues include aspartate 491 and aspartate 493. Residues threonine 548 and 577-579 (HGT) contribute to the 3',5'-cyclic AMP site. Histidine 577 provides a ligand contact to Mg(2+). Positions 623-800 (DYLYYFNRSY…EVFQKIIDEK (178 aa)) are interaction with calmodulin.

It belongs to the adenylyl cyclase class-2 family. As to quaternary structure, interacts (via ATLF domain) with the cleaved form of protective antigen (PA-63) anthrax toxin; interaction is required for EF translocation into the host cytoplasm. The cofactor is Ca(2+).

Its subcellular location is the secreted. The protein resides in the host cytoplasm. The protein localises to the host cytosol. It catalyses the reaction ATP = 3',5'-cyclic AMP + diphosphate. Its activity is regulated as follows. Host calmodulin is an absolute requirement for its activation. Inhibited by ethyl 5-aminopyrazolo[1,5-a]quinazoline-3-carboxylate. Functionally, edema factor (EF), which constitutes one of the three proteins composing the anthrax toxin, causes edema in the host. Acts as a calmodulin-dependent adenylyl cyclase by converting ATP to cAMP, leading to dramatic elevation of intracellular cAMP levels in the host, thereby causing edema. EF is not toxic by itself and only acts as an edema factor when associated with protective antigen (PA) to form the edema toxin (EdTx). Required for the survival of germinated spores within macrophages at the early stages of infection. The polypeptide is Calmodulin-sensitive adenylate cyclase (cya) (Bacillus anthracis).